The chain runs to 367 residues: Endophilin-A2 (367 aa).

A membrane-binding amphipathic helix region spans residues 1–21; it reads MSVAGLKKQFYKASQLVSEKV. In terms of domain architecture, BAR spans 18 to 249; it reads SEKVGGAEGT…LKRRMREASS (232 aa). The tract at residues 60 to 87 is required for dimerization upon membrane association; it reads PNPASRAKLTMLNTMSKIRGQVKNPGYP. The stretch at 181–250 forms a coiled coil; sequence EELRQAMEKF…KRRMREASSR (70 aa). Residues 218-254 are interaction with ARC; that stretch reads LVDAQLDYHRQAVQILDELAEKLKRRMREASSRPRRE. The tract at residues 243–293 is disordered; that stretch reads RMREASSRPRREYKPKPRETYDFGESDQSNGGFSCTPTPKVSASSSFRSDK. Positions 245 to 263 are enriched in basic and acidic residues; the sequence is REASSRPRREYKPKPRETY. Residues 268 to 289 are compositionally biased toward polar residues; that stretch reads SDQSNGGFSCTPTPKVSASSSF. The SH3 domain occupies 305–364; that stretch reads LDQPCCKALYDFEPENDGELGFKEGDIITLTNQIDENWYEGMINGQSGFFPLNYVEVLVP.

It belongs to the endophilin family. Interacts with ARC. Interacts with SYNJ1 and DNM1. Highest level in central region of the theca of developing follicles (at protein level). Expressed at highest level in brain and testis, at high level in kidney, lung and stroma, low level in spleen and adrenal gland (at protein level). Expressed in most tissue with highest levels in small ovarian follicles, brain and testis.

The protein resides in the cytoplasm. Its subcellular location is the early endosome membrane. The protein localises to the cell projection. It localises to the podosome. Functionally, implicated in endocytosis. May recruit other proteins to membranes with high curvature. The sequence is that of Endophilin-A2 from Gallus gallus (Chicken).